Consider the following 34-residue polypeptide: MNDQMFVETLIITSSFFAIAAVLVLSVLLIERTG.

The helical transmembrane segment at Leu-10–Ile-30 threads the bilayer.

It is found in the membrane. This is an uncharacterized protein from Escherichia coli O6:H1 (strain CFT073 / ATCC 700928 / UPEC).